The primary structure comprises 166 residues: Prorelaxin H2 (166 aa).

The first 5 residues, 1–5 (SRAVA), serve as a signal peptide directing secretion. 3 cysteine pairs are disulfide-bonded: Cys16–Cys153, Cys28–Cys166, and Cys152–Cys157. Positions 37-138 (SLSQEDAPQT…LKYLGLDTHS (102 aa)) are cleaved as a propeptide — connecting peptide.

It belongs to the insulin family. In terms of assembly, heterodimer of a B chain and an A chain linked by two disulfide bonds. As to expression, expressed in the corpus luteum of pregnancy and in the placenta.

The protein localises to the secreted. Relaxin is an ovarian hormone that acts with estrogen to produce dilatation of the birth canal in many mammals. May be involved in remodeling of connective tissues during pregnancy, promoting growth of pubic ligaments and ripening of the cervix. The chain is Prorelaxin H2 (RNL2) from Pan troglodytes (Chimpanzee).